We begin with the raw amino-acid sequence, 128 residues long: Translation initiation factor 5A (128 aa).

Hypusine is present on lysine 35.

It belongs to the eIF-5A family.

It localises to the cytoplasm. Functionally, functions by promoting the formation of the first peptide bond. This chain is Translation initiation factor 5A, found in Methanosarcina barkeri (strain Fusaro / DSM 804).